The following is a 342-amino-acid chain: Holliday junction branch migration complex subunit RuvB (342 aa).

The tract at residues 1–185 (MTVKPLRDVT…FPIQERLEYY (185 aa)) is large ATPase domain (RuvB-L). ATP-binding positions include leucine 24, arginine 25, glycine 66, lysine 69, threonine 70, serine 71, 132–134 (EDY), arginine 175, tyrosine 185, and arginine 222. Threonine 70 contributes to the Mg(2+) binding site. Residues 186–256 (GPAELKEIAV…VVDRTLRRLE (71 aa)) form a small ATPAse domain (RuvB-S) region. Residues 259–342 (ARGLDAMDRR…RSGGKQGSLV (84 aa)) are head domain (RuvB-H). DNA is bound by residues arginine 314 and arginine 319.

Belongs to the RuvB family. In terms of assembly, homohexamer. Forms an RuvA(8)-RuvB(12)-Holliday junction (HJ) complex. HJ DNA is sandwiched between 2 RuvA tetramers; dsDNA enters through RuvA and exits via RuvB. An RuvB hexamer assembles on each DNA strand where it exits the tetramer. Each RuvB hexamer is contacted by two RuvA subunits (via domain III) on 2 adjacent RuvB subunits; this complex drives branch migration. In the full resolvosome a probable DNA-RuvA(4)-RuvB(12)-RuvC(2) complex forms which resolves the HJ.

The protein localises to the cytoplasm. The catalysed reaction is ATP + H2O = ADP + phosphate + H(+). Functionally, the RuvA-RuvB-RuvC complex processes Holliday junction (HJ) DNA during genetic recombination and DNA repair, while the RuvA-RuvB complex plays an important role in the rescue of blocked DNA replication forks via replication fork reversal (RFR). RuvA specifically binds to HJ cruciform DNA, conferring on it an open structure. The RuvB hexamer acts as an ATP-dependent pump, pulling dsDNA into and through the RuvAB complex. RuvB forms 2 homohexamers on either side of HJ DNA bound by 1 or 2 RuvA tetramers; 4 subunits per hexamer contact DNA at a time. Coordinated motions by a converter formed by DNA-disengaged RuvB subunits stimulates ATP hydrolysis and nucleotide exchange. Immobilization of the converter enables RuvB to convert the ATP-contained energy into a lever motion, pulling 2 nucleotides of DNA out of the RuvA tetramer per ATP hydrolyzed, thus driving DNA branch migration. The RuvB motors rotate together with the DNA substrate, which together with the progressing nucleotide cycle form the mechanistic basis for DNA recombination by continuous HJ branch migration. Branch migration allows RuvC to scan DNA until it finds its consensus sequence, where it cleaves and resolves cruciform DNA. This chain is Holliday junction branch migration complex subunit RuvB, found in Anaeromyxobacter dehalogenans (strain 2CP-C).